The chain runs to 127 residues: MRKLVFGLFVLAASVAPAAAQDAASGEQVFKQCLVCHSIGPGAKNKVGPVLNGLFGRHSGTIEGFAYSDANKNSGITWTEEVFREYIRDPKAKIPGTKMIFAGVKDEQKVSDLIAYIKQFNADGSKK.

Positions 1 to 20 are cleaved as a signal peptide; that stretch reads MRKLVFGLFVLAASVAPAAA. Residue Q21 is modified to Pyrrolidone carboxylic acid. Heme c contacts are provided by C33, C36, H37, and M99.

Belongs to the cytochrome c family. In terms of processing, binds 1 heme c group covalently per subunit.

Its function is as follows. Cytochrome c2 is found mainly in purple, non-sulfur, photosynthetic bacteria where it functions as the electron donor to the oxidized bacteriochlorophyll in the photophosphorylation pathway. However, it may also have a role in the respiratory chain and is found in some non-photosynthetic bacteria. The polypeptide is Cytochrome c2 (cycA) (Blastochloris viridis (Rhodopseudomonas viridis)).